Consider the following 377-residue polypeptide: uncharacterized protein (377 aa).

Positions 1 to 23 (MLKFRNFFKLTLLTLASAFFLSG) are cleaved as a signal peptide. Cysteine 24 is lipidated: N-palmitoyl cysteine. A lipid anchor (S-diacylglycerol cysteine) is attached at cysteine 24.

It localises to the cell membrane. This is an uncharacterized protein from Mycoplasma genitalium (strain ATCC 33530 / DSM 19775 / NCTC 10195 / G37) (Mycoplasmoides genitalium).